Here is a 382-residue protein sequence, read N- to C-terminus: D-galactonate dehydratase (382 aa).

A Mg(2+)-binding site is contributed by D183. H185 functions as the Proton donor in the catalytic mechanism. Mg(2+)-binding residues include E209 and E235. H285 (proton acceptor) is an active-site residue.

Belongs to the mandelate racemase/muconate lactonizing enzyme family. GalD subfamily. The cofactor is Mg(2+).

The catalysed reaction is D-galactonate = 2-dehydro-3-deoxy-D-galactonate + H2O. Its pathway is carbohydrate acid metabolism; D-galactonate degradation; D-glyceraldehyde 3-phosphate and pyruvate from D-galactonate: step 1/3. Functionally, catalyzes the dehydration of D-galactonate to 2-keto-3-deoxy-D-galactonate. This Salmonella gallinarum (strain 287/91 / NCTC 13346) protein is D-galactonate dehydratase.